The sequence spans 509 residues: Zinc finger protein Aiolos (509 aa).

The interval 1–85 (MEDIKPNVEL…PMGNAEEPEI (85 aa)) is disordered. Polar residues predominate over residues 10 to 20 (LKSTQEQSVPT). The residue at position 20 (Thr-20) is a Phosphothreonine. Residues 56–72 (DSMKVKDEYSERDENVL) show a composition bias toward basic and acidic residues. Residues Lys-61, Lys-73, and Lys-100 each participate in a glycyl lysine isopeptide (Lys-Gly) (interchain with G-Cter in SUMO2) cross-link. C2H2-type zinc fingers lie at residues 118–140 (MNCD…KRSH), 146–168 (FQCN…IKLH), and 174–196 (FKCH…LRTH). The C2H2-type 4; atypical zinc finger occupies 202–224 (YKCEFCGRSYKQRSSLEEHKERC). Residue Lys-245 forms a Glycyl lysine isopeptide (Lys-Gly) (interchain with G-Cter in SUMO2) linkage. Position 326 is a phosphothreonine (Thr-326). Residues 365 to 421 (HLPEKSLPSERGLSPTNSGHDSTDTDSNHEERQNHIYQQNPMVPPRARNGMPLLKEG) form a disordered region. Position 378 is a phosphoserine (Ser-378). Positions 385-398 (DSTDTDSNHEERQN) are enriched in basic and acidic residues. A C2H2-type 5 zinc finger spans residues 452–474 (YRCDHCRVLFLDYVMFTIHMGCH). Residues 452-504 (YRCDHCRVLFLDYVMFTIHMGCHGFRDPFECNMCGYRSHDRYEFSSHIARGEH) are mediates homodimerization and heterodimerization. The segment at 480–504 (FECNMCGYRSHDRYEFSSHIARGEH) adopts a C2H2-type 6; atypical zinc-finger fold.

Belongs to the Ikaros C2H2-type zinc-finger protein family. As to quaternary structure, homodimer. Heterodimer with other IKAROS family members. Interacts with IKZF4 and IKZF5. Interacts with IKZF1. Interacts with HRAS. Interacts with FOXP3; this interaction may be required for silencing target genes and regulating the suppressive activity of FOXP3-positive regulatory T-cells (Treg). Interacts with BCL21L; this interaction blocks the anti-apoptotic role of BCL21L. Associates with histone deacetylase complexes containing HDAC1, MTA2 and SIN3A.

Its subcellular location is the nucleus. The protein localises to the cytoplasm. Transcription factor that plays an important role in the regulation of lymphocyte differentiation. Plays an essential role in regulation of B-cell differentiation, proliferation and maturation to an effector state. Involved in regulating BCL2 expression and controlling apoptosis in T-cells in an IL2-dependent manner. This chain is Zinc finger protein Aiolos (IKZF3), found in Bos taurus (Bovine).